The sequence spans 232 residues: 5'-methylthioadenosine/S-adenosylhomocysteine nucleosidase (232 aa).

Glu12 functions as the Proton acceptor in the catalytic mechanism. Substrate is bound by residues Gly78, Ile152, and 173 to 174 (ME). Asp197 acts as the Proton donor in catalysis.

This sequence belongs to the PNP/UDP phosphorylase family. MtnN subfamily. As to quaternary structure, homodimer.

It carries out the reaction S-adenosyl-L-homocysteine + H2O = S-(5-deoxy-D-ribos-5-yl)-L-homocysteine + adenine. The enzyme catalyses S-methyl-5'-thioadenosine + H2O = 5-(methylsulfanyl)-D-ribose + adenine. It catalyses the reaction 5'-deoxyadenosine + H2O = 5-deoxy-D-ribose + adenine. It functions in the pathway amino-acid biosynthesis; L-methionine biosynthesis via salvage pathway; S-methyl-5-thio-alpha-D-ribose 1-phosphate from S-methyl-5'-thioadenosine (hydrolase route): step 1/2. In terms of biological role, catalyzes the irreversible cleavage of the glycosidic bond in both 5'-methylthioadenosine (MTA) and S-adenosylhomocysteine (SAH/AdoHcy) to adenine and the corresponding thioribose, 5'-methylthioribose and S-ribosylhomocysteine, respectively. Also cleaves 5'-deoxyadenosine, a toxic by-product of radical S-adenosylmethionine (SAM) enzymes, into 5-deoxyribose and adenine. Thus, is required for in vivo function of the radical SAM enzymes biotin synthase and lipoic acid synthase, that are inhibited by 5'-deoxyadenosine accumulation. The chain is 5'-methylthioadenosine/S-adenosylhomocysteine nucleosidase from Salmonella paratyphi B (strain ATCC BAA-1250 / SPB7).